Reading from the N-terminus, the 161-residue chain is Allophycocyanin beta chain (161 aa).

N71 carries the post-translational modification N4-methylasparagine. C81 contacts (2R,3E)-phycocyanobilin.

This sequence belongs to the phycobiliprotein family. In terms of assembly, heterodimer of an alpha and a beta chain. Post-translationally, contains one covalently linked phycocyanobilin chromophore.

Its subcellular location is the cellular thylakoid membrane. Light-harvesting photosynthetic bile pigment-protein from the phycobiliprotein complex. Allophycocyanin has a maximum absorption at approximately 650 nanometers. The protein is Allophycocyanin beta chain (apcB) of Thermosynechococcus vestitus (strain NIES-2133 / IAM M-273 / BP-1).